We begin with the raw amino-acid sequence, 1043 residues long: Integrator complex subunit 3 (1043 aa).

The residue at position 1 (Met-1) is an N-acetylmethionine. Ser-502, Ser-537, and Ser-995 each carry phosphoserine. The disordered stretch occupies residues 977–1043 (YEDSSTKPPK…GSSAVGSDSD (67 aa)). The span at 1008-1022 (AEEESGSSSASEEED) shows a compositional bias: acidic residues.

This sequence belongs to the Integrator subunit 3 family. In terms of assembly, component of the Integrator complex, composed of core subunits INTS1, INTS2, INTS3, INTS4, INTS5, INTS6, INTS7, INTS8, INTS9/RC74, INTS10, INTS11/CPSF3L, INTS12, INTS13, INTS14 and INTS15. The core complex associates with protein phosphatase 2A subunits PPP2CA and PPP2R1A, to form the Integrator-PP2A (INTAC) complex. Component of the SOSS complex, composed of SOSS-B (SOSS-B1/NABP2 or SOSS-B2/NABP1), SOSS-A/INTS3 and SOSS-C/INIP. SOSS complexes containing SOSS-B1/NABP2 are more abundant than complexes containing SOSS-B2/NABP1. Interacts with SOSS-B1/NABP2, SOSS-B2/NABP1 and SOSS-C/INIP; the interaction is direct. Interacts with NBN/NBS1.

The protein resides in the nucleus. Its subcellular location is the cytoplasm. Component of the integrator complex, a multiprotein complex that terminates RNA polymerase II (Pol II) transcription in the promoter-proximal region of genes. The integrator complex provides a quality checkpoint during transcription elongation by driving premature transcription termination of transcripts that are unfavorably configured for transcriptional elongation: the complex terminates transcription by (1) catalyzing dephosphorylation of the C-terminal domain (CTD) of Pol II subunit POLR2A/RPB1 and SUPT5H/SPT5, (2) degrading the exiting nascent RNA transcript via endonuclease activity and (3) promoting the release of Pol II from bound DNA. The integrator complex is also involved in terminating the synthesis of non-coding Pol II transcripts, such as enhancer RNAs (eRNAs), small nuclear RNAs (snRNAs), telomerase RNAs and long non-coding RNAs (lncRNAs). Within the integrator complex, INTS3 is involved in the post-termination step: INTS3 binds INTS7 in the open conformation of integrator complex and prevents the rebinding of Pol II to the integrator after termination cycle. Mediates recruitment of cytoplasmic dynein to the nuclear envelope, probably as component of the integrator complex. Functionally, component of the SOSS complex, a multiprotein complex that functions downstream of the MRN complex to promote DNA repair and G2/M checkpoint. The SOSS complex associates with single-stranded DNA at DNA lesions and influences diverse endpoints in the cellular DNA damage response including cell-cycle checkpoint activation, recombinational repair and maintenance of genomic stability. The SOSS complex is required for efficient homologous recombination-dependent repair of double-strand breaks (DSBs) and ATM-dependent signaling pathways. In the SOSS complex, it is required for the assembly of the complex and for stabilization of the complex at DNA damage sites. This Homo sapiens (Human) protein is Integrator complex subunit 3.